Consider the following 130-residue polypeptide: Ribonuclease pancreatic (130 aa).

Positions 1–6 (VQPSLG) are cleaved as a signal peptide. Substrate is bound by residues lysine 13 and arginine 16. Catalysis depends on histidine 18, which acts as the Proton acceptor. Disulfide bonds link cysteine 32–cysteine 90, cysteine 46–cysteine 101, cysteine 64–cysteine 116, and cysteine 71–cysteine 78. N-linked (GlcNAc...) asparagine glycosylation occurs at asparagine 40. Residues 47-51 (KPVNT), lysine 72, and arginine 91 contribute to the substrate site. The active-site Proton donor is the histidine 125.

This sequence belongs to the pancreatic ribonuclease family. Monomer. Interacts with and forms tight 1:1 complexes with RNH1. Dimerization of two such complexes may occur. Interaction with RNH1 inhibits this protein. As to expression, pancreas.

Its subcellular location is the secreted. The enzyme catalyses an [RNA] containing cytidine + H2O = an [RNA]-3'-cytidine-3'-phosphate + a 5'-hydroxy-ribonucleotide-3'-[RNA].. The catalysed reaction is an [RNA] containing uridine + H2O = an [RNA]-3'-uridine-3'-phosphate + a 5'-hydroxy-ribonucleotide-3'-[RNA].. Functionally, endonuclease that catalyzes the cleavage of RNA on the 3' side of pyrimidine nucleotides. Acts on single-stranded and double-stranded RNA. This is Ribonuclease pancreatic (RNASE1) from Cricetulus griseus (Chinese hamster).